The primary structure comprises 790 residues: Cadherin-6 (790 aa).

Positions 1 to 18 are cleaved as a signal peptide; it reads MRTYRYFLLLFWVGQPYP. Positions 19–53 are excised as a propeptide; sequence TFSNPLSKRTSGFPAKRKALELSANSRNELSRSKR. Cadherin domains lie at 54–159, 160–268, 269–383, 384–486, and 487–608; these read SWMW…EPIF, TKDV…PPRF, PQST…PPVF, SKLA…DNAP, and EFAE…LIHP. The Extracellular portion of the chain corresponds to 54 to 615; sequence SWMWNQFFLL…IHPTGLSTGA (562 aa). Asn255 is a glycosylation site (N-linked (GlcNAc...) asparagine). A disordered region spans residues 260–291; that stretch reads DVNDNPPRFPQSTYQFKTPESSPPGTPIGRIK. Positions 269-279 are enriched in polar residues; that stretch reads PQSTYQFKTPE. N-linked (GlcNAc...) asparagine glycans are attached at residues Asn399, Asn437, Asn455, and Asn536. The chain crosses the membrane as a helical span at residues 616-636; sequence LVAILLCIVILLVTVVLFAAL. The Cytoplasmic segment spans residues 637-790; the sequence is RRQRKKEPLI…YGGMDSDKDS (154 aa). A phosphoserine mark is found at Ser786 and Ser790.

It localises to the cell membrane. Its function is as follows. Cadherins are calcium-dependent cell adhesion proteins. They preferentially interact with themselves in a homophilic manner in connecting cells; cadherins may thus contribute to the sorting of heterogeneous cell types. This chain is Cadherin-6 (Cdh6), found in Mus musculus (Mouse).